We begin with the raw amino-acid sequence, 164 residues long: Elicitin-like protein 2 (164 aa).

The N-terminal stretch at 1-22 (MFSKTLVVLAAVAAVTVNGLTA) is a signal peptide. Cystine bridges form between Cys25-Cys91, Cys47-Cys76, and Cys71-Cys118. Residues 121 to 164 (ISGGGSTPTTAPPSGTTPTTPTTAPPTGTTPGVTPSPTTPKPAC) are disordered. Over residues 127–156 (TPTTAPPSGTTPTTPTTAPPTGTTPGVTPS) the composition is skewed to low complexity.

The protein belongs to the elicitin family.

The protein resides in the secreted. Induces local and distal defense responses (incompatible hypersensitive reaction) in plants from the solanaceae and cruciferae families. Elicits leaf necrosis and causes the accumulation of pathogenesis-related proteins. Might interact with the lipidic molecules of the plasma membrane. The polypeptide is Elicitin-like protein 2 (POD-2) (Pythium oligandrum (Mycoparasitic fungus)).